The chain runs to 457 residues: Glycine receptor subunit alpha-1 (457 aa).

Residues 1–28 (MYSFNTLRFYLWETIVFFSLAASKEAEA) form the signal peptide. The Extracellular segment spans residues 29–250 (ARSAPKPMSP…RFHLERQMGY (222 aa)). Asparagine 66 carries an N-linked (GlcNAc...) asparagine glycan. Glycine-binding residues include arginine 93 and serine 157. An intrachain disulfide couples cysteine 166 to cysteine 180. Zn(2+) contacts are provided by glutamate 220 and aspartate 222. Cysteine 226 and cysteine 237 are joined by a disulfide. 230–235 (YNTGKF) contacts strychnine. Glycine is bound at residue threonine 232. A Zn(2+)-binding site is contributed by histidine 243. A helical transmembrane segment spans residues 251–272 (YLIQMYIPSLLIVILSWISFWI). Residues 273-277 (NMDAA) are Cytoplasmic-facing. The chain crosses the membrane as a helical span at residues 278-298 (PARVGLGITTVLTMTTQSSGS). Over 299–309 (RASLPKVSYVK) the chain is Extracellular. Residues 310-330 (AIDIWMAVCLLFVFSALLEYA) traverse the membrane as a helical segment. Residues 331–425 (AVNFVSRQHK…FIQRAKKIDK (95 aa)) are Cytoplasmic-facing. Residues 391-410 (KGANNNNTTNPPPAPSKSPE) are disordered. Residues 426-446 (ISRIGFPMAFLIFNMFYWIIY) form a helical membrane-spanning segment. Topologically, residues 447–457 (KIVRREDVHNK) are extracellular.

Belongs to the ligand-gated ion channel (TC 1.A.9) family. Glycine receptor (TC 1.A.9.3) subfamily. GLRA1 sub-subfamily. In terms of assembly, interacts with GLRB to form heteropentameric channels; this is probably the predominant form in vivo. Heteropentamer composed of four GLRA1 subunits and one GLRB subunit. Heteropentamer composed of two GLRA1 and three GLRB. Heteropentamer composed of three GLRA1 and two GLRB. Homopentamer (in vitro). Both homopentamers and heteropentamers form functional ion channels, but their characteristics are subtly different. As to expression, detected in spinal cord neurons. Detected in brain stem neurons. Detected at lower levels in hippocampus and cerebellum. Detected in the inner plexiform layer of the retina (at protein level).

The protein resides in the postsynaptic cell membrane. Its subcellular location is the synapse. The protein localises to the perikaryon. It is found in the cell projection. It localises to the dendrite. The protein resides in the cell membrane. The catalysed reaction is chloride(in) = chloride(out). Its activity is regulated as follows. Channel opening is triggered by extracellular glycine. Channel characteristics depend on the subunit composition; heteropentameric channels are activated by lower glycine levels and display faster desensitization. Channel opening is also triggered by taurine and beta-alanine. Inhibited by strychnine. Strychnine binding locks the channel in a closed conformation and prevents channel opening in response to extracellular glycine. Inhibited by picrotoxin. Channel activity is enhanced by 5 uM Zn(2+) and inhibited by 100 uM Zn(2+). Its function is as follows. Subunit of heteromeric glycine-gated chloride channels. Plays an important role in the down-regulation of neuronal excitability. Contributes to the generation of inhibitory postsynaptic currents. Channel activity is potentiated by ethanol. Potentiation of channel activity by intoxicating levels of ethanol contribute to the sedative effects of ethanol. This Mus musculus (Mouse) protein is Glycine receptor subunit alpha-1 (Glra1).